The chain runs to 518 residues: GMP synthase [glutamine-hydrolyzing] (518 aa).

One can recognise a Glutamine amidotransferase type-1 domain in the interval 13–203 (KIIVLDFGSQ…ALNVCGCKGD (191 aa)). Cysteine 90 functions as the Nucleophile in the catalytic mechanism. Catalysis depends on residues histidine 177 and glutamate 179. Residues 204–393 (WTMENFSEVE…LGMPDAIVWR (190 aa)) form the GMPS ATP-PPase domain. ATP is bound at residue 231-237 (SGGVDSS).

In terms of assembly, homodimer.

It catalyses the reaction XMP + L-glutamine + ATP + H2O = GMP + L-glutamate + AMP + diphosphate + 2 H(+). The protein operates within purine metabolism; GMP biosynthesis; GMP from XMP (L-Gln route): step 1/1. In terms of biological role, catalyzes the synthesis of GMP from XMP. The sequence is that of GMP synthase [glutamine-hydrolyzing] from Listeria welshimeri serovar 6b (strain ATCC 35897 / DSM 20650 / CCUG 15529 / CIP 8149 / NCTC 11857 / SLCC 5334 / V8).